The primary structure comprises 176 residues: Ribosome maturation factor RimM (176 aa).

In terms of domain architecture, PRC barrel spans 102–175 (KNDYYWNDII…TDKKFILVQW (74 aa)).

Belongs to the RimM family. As to quaternary structure, binds ribosomal protein uS19.

Its subcellular location is the cytoplasm. Its function is as follows. An accessory protein needed during the final step in the assembly of 30S ribosomal subunit, possibly for assembly of the head region. Essential for efficient processing of 16S rRNA. May be needed both before and after RbfA during the maturation of 16S rRNA. It has affinity for free ribosomal 30S subunits but not for 70S ribosomes. The protein is Ribosome maturation factor RimM of Buchnera aphidicola subsp. Acyrthosiphon pisum (strain APS) (Acyrthosiphon pisum symbiotic bacterium).